The sequence spans 107 residues: Flagellar transcriptional regulator FlhD (107 aa).

The protein belongs to the FlhD family. Homodimer; disulfide-linked. Forms a heterohexamer composed of two FlhC and four FlhD subunits. Each FlhC binds a FlhD dimer, forming a heterotrimer, and a hexamer assembles by dimerization of two heterotrimers.

It is found in the cytoplasm. In terms of biological role, functions in complex with FlhC as a master transcriptional regulator that regulates transcription of several flagellar and non-flagellar operons by binding to their promoter region. Activates expression of class 2 flagellar genes, including fliA, which is a flagellum-specific sigma factor that turns on the class 3 genes. Also regulates genes whose products function in a variety of physiological pathways. This Bordetella pertussis (strain Tohama I / ATCC BAA-589 / NCTC 13251) protein is Flagellar transcriptional regulator FlhD.